Reading from the N-terminus, the 201-residue chain is Probable quinol oxidase subunit 3 (201 aa).

5 helical membrane passes run 20 to 40 (LGFWIFITAEFALFGTLFATL), 62 to 82 (LVLIMTFALLFSSYTCGIAIY), 91 to 111 (LMMFWMIITLLLGLVFVGFEI), 133 to 153 (FFILLGTHGCHVSLGIVWAIC), and 172 to 192 (FIVSLYWHFLDVVWVFIFTAV).

Belongs to the cytochrome c oxidase subunit 3 family.

It localises to the cell membrane. It carries out the reaction 2 a quinol + O2 = 2 a quinone + 2 H2O. Its function is as follows. Catalyzes quinol oxidation with the concomitant reduction of oxygen to water. The polypeptide is Probable quinol oxidase subunit 3 (qoxC) (Staphylococcus aureus (strain MSSA476)).